The sequence spans 556 residues: 2-succinyl-5-enolpyruvyl-6-hydroxy-3-cyclohexene-1-carboxylate synthase (556 aa).

The protein belongs to the TPP enzyme family. MenD subfamily. Homodimer. It depends on Mg(2+) as a cofactor. Mn(2+) is required as a cofactor. Thiamine diphosphate serves as cofactor.

The enzyme catalyses isochorismate + 2-oxoglutarate + H(+) = 5-enolpyruvoyl-6-hydroxy-2-succinyl-cyclohex-3-ene-1-carboxylate + CO2. It participates in quinol/quinone metabolism; 1,4-dihydroxy-2-naphthoate biosynthesis; 1,4-dihydroxy-2-naphthoate from chorismate: step 2/7. The protein operates within quinol/quinone metabolism; menaquinone biosynthesis. In terms of biological role, catalyzes the thiamine diphosphate-dependent decarboxylation of 2-oxoglutarate and the subsequent addition of the resulting succinic semialdehyde-thiamine pyrophosphate anion to isochorismate to yield 2-succinyl-5-enolpyruvyl-6-hydroxy-3-cyclohexene-1-carboxylate (SEPHCHC). This is 2-succinyl-5-enolpyruvyl-6-hydroxy-3-cyclohexene-1-carboxylate synthase from Shigella sonnei (strain Ss046).